We begin with the raw amino-acid sequence, 653 residues long: Fructose-1,6-bisphosphatase class 3 (653 aa).

It belongs to the FBPase class 3 family. Requires Mn(2+) as cofactor.

It carries out the reaction beta-D-fructose 1,6-bisphosphate + H2O = beta-D-fructose 6-phosphate + phosphate. Its pathway is carbohydrate biosynthesis; gluconeogenesis. In Listeria innocua serovar 6a (strain ATCC BAA-680 / CLIP 11262), this protein is Fructose-1,6-bisphosphatase class 3.